The following is a 667-amino-acid chain: WD repeat-containing protein 48 homolog (667 aa).

WD repeat units follow at residues 26-65 (QHRNGVNALQLDANNGKLYSAGRDAIIRVWNTRTESNEKY), 71-110 (HHNDWVNDIVLCCNGRNLISASCDTTVKVWNAQKGFCMST), 113-152 (THRDYVQALAYAKDREQVASAGLDKAIFLWDVNTLTALTA), 164-203 (GSKDSIYSLAMNPSGTVIVSGSTENILRIWDPRTCMRSMK), 206-245 (GHTENVRCLVVSPDGNQVVSGSSDGTIKVWNLGQQRCVQT), 248-287 (VHKEGVWSLLMSENFQYIISGSRDRNIIVTEMRNPSNKML), 290-329 (EEQAPVLSLGYNIDKTGVWATTWNSDIRCWKLPMYDRCTL), and 350-389 (KGGAAIKECTVLNDKRYIITKDSQDQVVVYDVLRVVKKEQ). The tract at residues 591 to 615 (ETTPSGGNANNSLQNSQSDANSEGS) is disordered.

It belongs to the WD repeat WDR48 family. As to quaternary structure, catalytic component of the Usp12-46 deubiquitylase complex consisting of Usp12-46, Wdr20 and Uaf1; regulatory subunit that, together wtih Wdr20, stabilizes Usp12-46. The Usp12-46 deubiquitylase complex associates with arr/arrow; the interaction leads to deubiquitination and stabilization of arr/arrow.

Regulatory component of the Usp12-46 deubiquitylase complex. activates deubiquitination by increasing the catalytic turnover without increasing the affinity of deubiquitinating enzymes for the substrate. The complex deubiquitylates the wg/wingless-signaling receptor arr/arrow, which stabilizes the receptor and increases its concentration at the cell surface; this enhances the sensitivity of cells to wg/wingless-signal stimulation. This increases the amplitude and spatial range of the signaling response to the wg/wingless morphogen gradient, facilitating the precise concentration-dependent regulation of its target genes. Together with Wdr20 and Usp12-46 required for wg/wingless-mediated signaling in the wing imaginal disc and for wg/wingless-dependent regulation of intestinal stem cell proliferation. The protein is WD repeat-containing protein 48 homolog of Drosophila ananassae (Fruit fly).